Consider the following 148-residue polypeptide: Small ribosomal subunit protein bS6 (148 aa).

The tract at residues 96-148 (HEEGQSAMLTRRDDRRERDGDDRPRRREGGFDRGDRGDRGPRRPRDNEAGEGA) is disordered.

It belongs to the bacterial ribosomal protein bS6 family.

Functionally, binds together with bS18 to 16S ribosomal RNA. This Brucella melitensis biotype 1 (strain ATCC 23456 / CCUG 17765 / NCTC 10094 / 16M) protein is Small ribosomal subunit protein bS6.